The primary structure comprises 409 residues: MEEYLNPINIFSEIGRLKKVLLHRPGEELENLTPFIMKNFLFDDIPYLEVARQEHEVFASILKNNLVEIEYIEDLISEVLVSSVALENKFISQFILEAEIKTDFTINLLKDYFSSLTIDNMISKMISGVVTEELKNYTSSLDDLVNGANLFIIDPMPNVLFTRDPFASIGNGVTINKMFTKVRQRETIFAEYIFKYHPVYKENVPIWLNRWEEASLEGGDELVLNKGLLVIGISERTEAKSVEKLAISLFKNKTSFDTILAFQIPKNRSYMHLDTVFTQIDYSVFTSFTSDDMYFSIYVLTYNPSSSKIHIKKEKARIKDVLSFYLGRKIDIIKCAGGDLIHGAREQWNDGANVLAIAPGEIIAYSRNHVTNKLFEENGIKVHRIPSSELSRGRGGPRCMSMPLIREDI.

Cysteine 399 acts as the Amidino-cysteine intermediate in catalysis.

This sequence belongs to the arginine deiminase family.

The protein localises to the cytoplasm. The catalysed reaction is L-arginine + H2O = L-citrulline + NH4(+). It participates in amino-acid degradation; L-arginine degradation via ADI pathway; carbamoyl phosphate from L-arginine: step 1/2. This chain is Arginine deiminase (arcA), found in Borreliella afzelii (Borrelia afzelii).